Consider the following 138-residue polypeptide: Transcription antitermination protein NusB (138 aa).

It belongs to the NusB family.

Functionally, involved in transcription antitermination. Required for transcription of ribosomal RNA (rRNA) genes. Binds specifically to the boxA antiterminator sequence of the ribosomal RNA (rrn) operons. This is Transcription antitermination protein NusB from Helicobacter acinonychis (strain Sheeba).